A 349-amino-acid chain; its full sequence is UDP-3-O-acylglucosamine N-acyltransferase (349 aa).

Residue histidine 248 is the Proton acceptor of the active site.

Belongs to the transferase hexapeptide repeat family. LpxD subfamily. In terms of assembly, homotrimer.

The enzyme catalyses a UDP-3-O-[(3R)-3-hydroxyacyl]-alpha-D-glucosamine + a (3R)-hydroxyacyl-[ACP] = a UDP-2-N,3-O-bis[(3R)-3-hydroxyacyl]-alpha-D-glucosamine + holo-[ACP] + H(+). The protein operates within bacterial outer membrane biogenesis; LPS lipid A biosynthesis. Functionally, catalyzes the N-acylation of UDP-3-O-acylglucosamine using 3-hydroxyacyl-ACP as the acyl donor. Is involved in the biosynthesis of lipid A, a phosphorylated glycolipid that anchors the lipopolysaccharide to the outer membrane of the cell. The sequence is that of UDP-3-O-acylglucosamine N-acyltransferase from Colwellia psychrerythraea (strain 34H / ATCC BAA-681) (Vibrio psychroerythus).